The primary structure comprises 306 residues: Glutaminase (306 aa).

Ser-61, Asn-111, Glu-157, Asn-164, Tyr-188, Tyr-240, and Val-258 together coordinate substrate.

Belongs to the glutaminase family. Homotetramer.

The catalysed reaction is L-glutamine + H2O = L-glutamate + NH4(+). The chain is Glutaminase from Pseudoalteromonas atlantica (strain T6c / ATCC BAA-1087).